Reading from the N-terminus, the 985-residue chain is Phosphoenolpyruvate carboxylase (985 aa).

The span at 1-17 shows a compositional bias: low complexity; sequence MTQSAARRASSRATPAR. The disordered stretch occupies residues 1–55; it reads MTQSAARRASSRATPARKTPPAPASQTPAPSPGGTAGTALGPTSRRSSGSAAAKD. Residues H193 and K634 contribute to the active site.

It belongs to the PEPCase type 1 family. The cofactor is Mg(2+).

The catalysed reaction is oxaloacetate + phosphate = phosphoenolpyruvate + hydrogencarbonate. Forms oxaloacetate, a four-carbon dicarboxylic acid source for the tricarboxylic acid cycle. In Ralstonia nicotianae (strain ATCC BAA-1114 / GMI1000) (Ralstonia solanacearum), this protein is Phosphoenolpyruvate carboxylase.